The sequence spans 306 residues: UDP-3-O-acyl-N-acetylglucosamine deacetylase (306 aa).

3 residues coordinate Zn(2+): His79, His238, and Asp242. Catalysis depends on His265, which acts as the Proton donor.

Belongs to the LpxC family. Zn(2+) serves as cofactor.

The catalysed reaction is a UDP-3-O-[(3R)-3-hydroxyacyl]-N-acetyl-alpha-D-glucosamine + H2O = a UDP-3-O-[(3R)-3-hydroxyacyl]-alpha-D-glucosamine + acetate. The protein operates within glycolipid biosynthesis; lipid IV(A) biosynthesis; lipid IV(A) from (3R)-3-hydroxytetradecanoyl-[acyl-carrier-protein] and UDP-N-acetyl-alpha-D-glucosamine: step 2/6. Functionally, catalyzes the hydrolysis of UDP-3-O-myristoyl-N-acetylglucosamine to form UDP-3-O-myristoylglucosamine and acetate, the committed step in lipid A biosynthesis. This Shewanella piezotolerans (strain WP3 / JCM 13877) protein is UDP-3-O-acyl-N-acetylglucosamine deacetylase.